The sequence spans 292 residues: Zinc finger protein OZF (292 aa).

C2H2-type zinc fingers lie at residues F16–H38, F44–H66, F72–H94, F100–H122, F128–H150, F156–H178, Y184–H206, Y212–H234, Y240–H262, and Y268–H290. Residues K28, K51, and K56 each participate in a glycyl lysine isopeptide (Lys-Gly) (interchain with G-Cter in SUMO2) cross-link. Residues K157 and K169 each participate in a glycyl lysine isopeptide (Lys-Gly) (interchain with G-Cter in SUMO) cross-link. Residue K173 forms a Glycyl lysine isopeptide (Lys-Gly) (interchain with G-Cter in SUMO2) linkage. Residues Y212–H292 form an interaction with TERF2IP region.

The protein belongs to the krueppel C2H2-type zinc-finger protein family. As to quaternary structure, binds DNA. Interacts with SUMO conjugating enzyme UBC9/UBE2I. Interacts with the telomeric protein TERF2IP. In terms of processing, sumoylated. Liver, skeletal and heart muscle, mammary cells. Very low levels in brain, lung, placenta and kidney. Strongly overexpressed in many pancreas and colorectal cancers. Increased gene copy numbers are detected in 3 of 12 tumor cell lines and 2 of 12 primary pancreatic carcinomas. Overexpressed in 80% of colorectal cancers.

The protein resides in the nucleus. The sequence is that of Zinc finger protein OZF (ZNF146) from Homo sapiens (Human).